Consider the following 151-residue polypeptide: Putative transcriptional regulatory protein TK2151 (151 aa).

It belongs to the Tfx family.

Its function is as follows. Putative transcriptional regulator. The chain is Putative transcriptional regulatory protein TK2151 from Thermococcus kodakarensis (strain ATCC BAA-918 / JCM 12380 / KOD1) (Pyrococcus kodakaraensis (strain KOD1)).